An 89-amino-acid polypeptide reads, in one-letter code: Small ribosomal subunit protein uS15 (89 aa).

Belongs to the universal ribosomal protein uS15 family. In terms of assembly, part of the 30S ribosomal subunit. Forms a bridge to the 50S subunit in the 70S ribosome, contacting the 23S rRNA.

Functionally, one of the primary rRNA binding proteins, it binds directly to 16S rRNA where it helps nucleate assembly of the platform of the 30S subunit by binding and bridging several RNA helices of the 16S rRNA. Forms an intersubunit bridge (bridge B4) with the 23S rRNA of the 50S subunit in the ribosome. The sequence is that of Small ribosomal subunit protein uS15 from Acidithiobacillus ferrooxidans (strain ATCC 23270 / DSM 14882 / CIP 104768 / NCIMB 8455) (Ferrobacillus ferrooxidans (strain ATCC 23270)).